Reading from the N-terminus, the 93-residue chain is Cell division protein FtsB (93 aa).

Residues 1–3 (MRV) lie on the Cytoplasmic side of the membrane. The helical transmembrane segment at 4–21 (TLVVLLALFLALQYRLWF) threads the bilayer. At 22–93 (GKNSLPDYWR…FFRLVPDRNP (72 aa)) the chain is on the periplasmic side. A coiled-coil region spans residues 28-75 (DYWRLQQEVSNQKNTNENLERRNQLIYADIEDLREGEDALEERARNEL).

Belongs to the FtsB family. In terms of assembly, part of a complex composed of FtsB, FtsL and FtsQ.

Its subcellular location is the cell inner membrane. Functionally, essential cell division protein. May link together the upstream cell division proteins, which are predominantly cytoplasmic, with the downstream cell division proteins, which are predominantly periplasmic. This Idiomarina loihiensis (strain ATCC BAA-735 / DSM 15497 / L2-TR) protein is Cell division protein FtsB.